Consider the following 429-residue polypeptide: Adenylosuccinate synthetase (429 aa).

Residues 12–18 (GDEGKGK) and 40–42 (GHT) contribute to the GTP site. D13 functions as the Proton acceptor in the catalytic mechanism. The Mg(2+) site is built by D13 and G40. IMP is bound by residues 13-16 (DEGK), 38-41 (NAGH), T129, R143, Q223, T238, and R302. H41 (proton donor) is an active-site residue. 298–304 (TVTGRPR) contacts substrate. Residues R304, 330 to 332 (KLD), and 412 to 414 (STS) contribute to the GTP site.

It belongs to the adenylosuccinate synthetase family. Homodimer. Requires Mg(2+) as cofactor.

The protein resides in the cytoplasm. It catalyses the reaction IMP + L-aspartate + GTP = N(6)-(1,2-dicarboxyethyl)-AMP + GDP + phosphate + 2 H(+). It functions in the pathway purine metabolism; AMP biosynthesis via de novo pathway; AMP from IMP: step 1/2. Plays an important role in the de novo pathway of purine nucleotide biosynthesis. Catalyzes the first committed step in the biosynthesis of AMP from IMP. The protein is Adenylosuccinate synthetase of Gluconobacter oxydans (strain 621H) (Gluconobacter suboxydans).